Consider the following 500-residue polypeptide: Probable zinc metalloprotease MGYG_02393 (500 aa).

The N-terminal stretch at 1–24 is a signal peptide; the sequence is MHLSMGGLLPGLALLASANALALA. N-linked (GlcNAc...) asparagine glycans are attached at residues Asn-61, Asn-103, and Asn-124. Positions 174, 194, and 230 each coordinate Zn(2+). Asn-245 is a glycosylation site (N-linked (GlcNAc...) asparagine). Asp-257 is a binding site for Zn(2+). One can recognise a Fibronectin type-III domain in the interval 414–500; it reads MPRNVRVNTS…ERGVAVLPFP (87 aa). N-linked (GlcNAc...) asparagine glycans are attached at residues Asn-421 and Asn-427.

It belongs to the peptidase M28 family. M28B subfamily. It depends on Zn(2+) as a cofactor.

It is found in the secreted. The protein is Probable zinc metalloprotease MGYG_02393 of Arthroderma gypseum (strain ATCC MYA-4604 / CBS 118893) (Microsporum gypseum).